Reading from the N-terminus, the 155-residue chain is uncharacterized protein (155 aa).

The HTH asnC-type domain occupies 4–65; the sequence is IDEIDEIIVR…VVDTSFFGEF (62 aa). The segment at residues 23–42 is a DNA-binding region (H-T-H motif); sequence LTELGKKVGLTASAVKNRIE.

This is an uncharacterized protein from Pyrococcus abyssi (strain GE5 / Orsay).